Reading from the N-terminus, the 39-residue chain is Photosystem II reaction center protein L (39 aa).

A helical membrane pass occupies residues 18-38 (SLYLGLLLIAVLGILFSSYFF).

Belongs to the PsbL family. As to quaternary structure, PSII is composed of 1 copy each of membrane proteins PsbA, PsbB, PsbC, PsbD, PsbE, PsbF, PsbH, PsbI, PsbJ, PsbK, PsbL, PsbM, PsbT, PsbX, PsbY, PsbZ, Psb30/Ycf12, peripheral proteins PsbO, CyanoQ (PsbQ), PsbU, PsbV and a large number of cofactors. It forms dimeric complexes.

Its subcellular location is the cellular thylakoid membrane. In terms of biological role, one of the components of the core complex of photosystem II (PSII). PSII is a light-driven water:plastoquinone oxidoreductase that uses light energy to abstract electrons from H(2)O, generating O(2) and a proton gradient subsequently used for ATP formation. It consists of a core antenna complex that captures photons, and an electron transfer chain that converts photonic excitation into a charge separation. This subunit is found at the monomer-monomer interface and is required for correct PSII assembly and/or dimerization. This Crocosphaera subtropica (strain ATCC 51142 / BH68) (Cyanothece sp. (strain ATCC 51142)) protein is Photosystem II reaction center protein L.